A 417-amino-acid chain; its full sequence is Histidine--tRNA ligase (417 aa).

The protein belongs to the class-II aminoacyl-tRNA synthetase family. Homodimer.

The protein localises to the cytoplasm. It carries out the reaction tRNA(His) + L-histidine + ATP = L-histidyl-tRNA(His) + AMP + diphosphate + H(+). The protein is Histidine--tRNA ligase of Oleidesulfovibrio alaskensis (strain ATCC BAA-1058 / DSM 17464 / G20) (Desulfovibrio alaskensis).